Consider the following 944-residue polypeptide: Probable UDP-N-acetylglucosamine--peptide N-acetylglucosaminyltransferase SPINDLY (944 aa).

TPR repeat units lie at residues 34–67, 68–101, 102–135, 143–176, 177–210, 211–244, 252–285, 286–319, 320–353, 355–387, and 388–421; these read GTDA…DGAN, VEAL…DPKN, ACAL…DPSY, AIVL…DSHY, APAY…RPLY, AEAY…SPNF, AIAL…NWHY, ADAM…NPRC, AEAC…KPNF, QSLN…NPTY, and AEAY…DPDS. The interval 422–944 is catalytic region; sequence RNAGQNRLLA…RCEANGHSSR (523 aa). The interval 873 to 944 is disordered; it reads NATAEEDNQS…RCEANGHSSR (72 aa). A compositionally biased stretch (polar residues) spans 897-911; it reads PQPQIMVNGVTSPEG.

The protein belongs to the glycosyltransferase 41 family. O-GlcNAc transferase subfamily. In terms of tissue distribution, expressed in all parts of plants, including immature leaf blade, leaf sheath, mature leaf blade, roots, germinating embryos and aleurone layers.

The protein localises to the nucleus. The catalysed reaction is L-seryl-[protein] + UDP-N-acetyl-alpha-D-glucosamine = 3-O-(N-acetyl-beta-D-glucosaminyl)-L-seryl-[protein] + UDP + H(+). It carries out the reaction L-threonyl-[protein] + UDP-N-acetyl-alpha-D-glucosamine = 3-O-(N-acetyl-beta-D-glucosaminyl)-L-threonyl-[protein] + UDP + H(+). Its pathway is protein modification; protein glycosylation. Probable O-linked N-acetylglucosamine transferase (OGT) involved in various processes such as gibberellin (GA) signaling pathway. OGTs catalyze the addition of nucleotide-activated sugars directly onto the polypeptide through O-glycosidic linkage with the hydroxyl of serine or threonine. Probably acts by adding O-linked sugars to yet unknown proteins. The sequence is that of Probable UDP-N-acetylglucosamine--peptide N-acetylglucosaminyltransferase SPINDLY (SPY) from Hordeum vulgare (Barley).